The chain runs to 417 residues: MSISLSSLIFLPIWINMAQMQQGGSNETEQTAALKDLLSRIDLDELMKKDEPPFDFPDTLEGFEYAFNEKGQLRHIKTGEPFVFNYREDLHRWNQKRYEALGEIITRYVYELLESDCNLKKISIPVDATESEPKSFIFMSEDALTNPQKLMVLIHGSGVVRAGQWARRLIINEDLDSGTQIPFIKRAMDEGYGVIVLNPNENYIEVEKQKMHKQSSSSDGTDEPAGKRERRDKVSKETKKRRDFYEKYRNPQKEKEMMQLFIRENGSPEEHAVYVWDHFIAQAAAENVFFVAHSYGGLAFVELMIQREADVKSKVTAVALTDSVHNVWHQEAGKTIREWMRENCCNWVSSSEPLDTSVESMLPDCPRVSAGTDRHELTSWKSFPSIFKFFAEASEAKSSSQKPALTRRSHRIKHEEL.

Positions 1–18 are cleaved as a signal peptide; the sequence is MSISLSSLIFLPIWINMA. N-linked (GlcNAc...) asparagine glycosylation is present at N26. The segment at 208-248 is disordered; sequence KQKMHKQSSSSDGTDEPAGKRERRDKVSKETKKRRDFYEKY. A compositionally biased stretch (basic and acidic residues) spans 224–237; sequence PAGKRERRDKVSKE. S294 functions as the Nucleophile in the catalytic mechanism. Residues 398–417 are disordered; that stretch reads SSSQKPALTRRSHRIKHEEL. Residues 405 to 417 are compositionally biased toward basic residues; the sequence is LTRRSHRIKHEEL. The short motif at 414-417 is the Prevents secretion from ER element; sequence HEEL.

Belongs to the ARB2A family. In terms of assembly, interacts with AGO2. Found in a complex, composed of AGO2, CHD7 and ARB2A.

It is found in the nucleus. The protein localises to the cytoplasm. It localises to the endoplasmic reticulum. In terms of biological role, plays a role in the regulation of alternative splicing, by interacting with AGO2 and CHD7. Seems to be required for stabilizing protein-protein interactions at the chromatin-spliceosome interface. May have hydrolase activity. The protein is Cotranscriptional regulator ARB2A (Arb2a) of Mus musculus (Mouse).